The primary structure comprises 243 residues: 3-deoxy-manno-octulosonate cytidylyltransferase (243 aa).

The protein belongs to the KdsB family.

It localises to the cytoplasm. It catalyses the reaction 3-deoxy-alpha-D-manno-oct-2-ulosonate + CTP = CMP-3-deoxy-beta-D-manno-octulosonate + diphosphate. It functions in the pathway nucleotide-sugar biosynthesis; CMP-3-deoxy-D-manno-octulosonate biosynthesis; CMP-3-deoxy-D-manno-octulosonate from 3-deoxy-D-manno-octulosonate and CTP: step 1/1. Its pathway is bacterial outer membrane biogenesis; lipopolysaccharide biosynthesis. In terms of biological role, activates KDO (a required 8-carbon sugar) for incorporation into bacterial lipopolysaccharide in Gram-negative bacteria. The protein is 3-deoxy-manno-octulosonate cytidylyltransferase of Helicobacter acinonychis (strain Sheeba).